Reading from the N-terminus, the 467-residue chain is Cysteine--tRNA ligase (467 aa).

A Zn(2+)-binding site is contributed by C27. The 'HIGH' region motif lies at 29 to 39 (ATVQGLPHIGH). Zn(2+) contacts are provided by C209, H234, and E238. A 'KMSKS' region motif is present at residues 265-269 (KMSKS). K268 is an ATP binding site.

This sequence belongs to the class-I aminoacyl-tRNA synthetase family. As to quaternary structure, monomer. The cofactor is Zn(2+).

The protein resides in the cytoplasm. The catalysed reaction is tRNA(Cys) + L-cysteine + ATP = L-cysteinyl-tRNA(Cys) + AMP + diphosphate. This chain is Cysteine--tRNA ligase, found in Mycolicibacterium gilvum (strain PYR-GCK) (Mycobacterium gilvum (strain PYR-GCK)).